The sequence spans 393 residues: NAD(P)H-quinone oxidoreductase subunit H, chloroplastic (393 aa).

It belongs to the complex I 49 kDa subunit family. In terms of assembly, NDH is composed of at least 16 different subunits, 5 of which are encoded in the nucleus. Interacts with the chaperonin CNP60B4 subunit.

It is found in the plastid. The protein resides in the chloroplast thylakoid membrane. The enzyme catalyses a plastoquinone + NADH + (n+1) H(+)(in) = a plastoquinol + NAD(+) + n H(+)(out). It carries out the reaction a plastoquinone + NADPH + (n+1) H(+)(in) = a plastoquinol + NADP(+) + n H(+)(out). Functionally, NDH shuttles electrons from NAD(P)H:plastoquinone, via FMN and iron-sulfur (Fe-S) centers, to quinones in the photosynthetic chain and possibly in a chloroplast respiratory chain. The immediate electron acceptor for the enzyme in this species is believed to be plastoquinone. Couples the redox reaction to proton translocation, and thus conserves the redox energy in a proton gradient. This Arabidopsis thaliana (Mouse-ear cress) protein is NAD(P)H-quinone oxidoreductase subunit H, chloroplastic.